A 248-amino-acid polypeptide reads, in one-letter code: ATP synthase subunit a (248 aa).

6 helical membrane-spanning segments follow: residues 34–54 (TNVT…LVAG), 91–111 (YFPY…LGLI), 121–141 (IAVT…IGFV), 147–167 (FLSL…LAVI), 197–217 (FAGF…VMAI), and 220–240 (LEVL…CVYL).

Belongs to the ATPase A chain family. F-type ATPases have 2 components, CF(1) - the catalytic core - and CF(0) - the membrane proton channel. CF(1) has five subunits: alpha(3), beta(3), gamma(1), delta(1), epsilon(1). CF(0) has four main subunits: a, b, b' and c.

The protein localises to the cell inner membrane. In terms of biological role, key component of the proton channel; it plays a direct role in the translocation of protons across the membrane. This Dinoroseobacter shibae (strain DSM 16493 / NCIMB 14021 / DFL 12) protein is ATP synthase subunit a.